A 208-amino-acid polypeptide reads, in one-letter code: MARYTGPSCRLCRREGSELFLKGERCYTDKCAIKRRSYPPGQHGQGRIKVSDYGVQLREKQKVRRIYGILENQFRGYFETADRMKGVTGENLLFILERRLDNVAYRLGFATSRDEARQLVRHGHFTLNGKKVNIPSLQVKAGDVLQLREKSRKVAAISESLEGVVRRGIPQWLELEKDAFKGTVKAMPVREDITMPIQEQLIVELYSK.

In terms of domain architecture, S4 RNA-binding spans 98–159 (RRLDNVAYRL…KSRKVAAISE (62 aa)).

The protein belongs to the universal ribosomal protein uS4 family. In terms of assembly, part of the 30S ribosomal subunit. Contacts protein S5. The interaction surface between S4 and S5 is involved in control of translational fidelity.

Functionally, one of the primary rRNA binding proteins, it binds directly to 16S rRNA where it nucleates assembly of the body of the 30S subunit. With S5 and S12 plays an important role in translational accuracy. In Citrifermentans bemidjiense (strain ATCC BAA-1014 / DSM 16622 / JCM 12645 / Bem) (Geobacter bemidjiensis), this protein is Small ribosomal subunit protein uS4.